The following is a 207-amino-acid chain: Serotonin N-acetyltransferase (207 aa).

At Thr-31 the chain carries Phosphothreonine; by PKA. The region spanning 35–194 is the N-acetyltransferase domain; the sequence is SEFRCLTPQD…SLTFMELQCS (160 aa). Substrate is bound at residue Leu-124. Acetyl-CoA-binding positions include 124 to 126 and 132 to 137; these read LAV and QQGKGS. Residue Met-159 participates in substrate binding. Residue 168-170 coordinates acetyl-CoA; sequence YEK. Ser-205 carries the phosphoserine modification.

The protein belongs to the acetyltransferase family. AANAT subfamily. In terms of assembly, monomer. Interacts with several 14-3-3 proteins, including YWHAB, YWHAE, YWHAG and YWHAZ, preferentially when phosphorylated at Thr-31. Phosphorylation on Ser-205 also allows binding to YWHAZ, but with lower affinity. The interaction with YWHAZ considerably increases affinity for arylalkylamines and acetyl-CoA and protects the enzyme from dephosphorylation and proteasomal degradation. It may also prevent thiol-dependent inactivation. CAMP-dependent phosphorylation on both N-terminal Thr-31 and C-terminal Ser-205 regulates AANAT activity by promoting interaction with 14-3-3 proteins. In terms of tissue distribution, highly expressed in pineal gland and retina. Also detected in heart and intestine.

It localises to the cytoplasm. It carries out the reaction a 2-arylethylamine + acetyl-CoA = an N-acetyl-2-arylethylamine + CoA + H(+). It participates in aromatic compound metabolism; melatonin biosynthesis; melatonin from serotonin: step 1/2. In terms of biological role, controls the night/day rhythm of melatonin production in the pineal gland. Catalyzes the N-acetylation of serotonin into N-acetylserotonin, the penultimate step in the synthesis of melatonin. This is Serotonin N-acetyltransferase (AANAT) from Mesocricetus auratus (Golden hamster).